The following is a 307-amino-acid chain: Acetyl-coenzyme A carboxylase carboxyl transferase subunit beta (307 aa).

A CoA carboxyltransferase N-terminal domain is found at V25–K294. Zn(2+) contacts are provided by C29, C32, C48, and C51. The C4-type zinc-finger motif lies at C29–C51.

Belongs to the AccD/PCCB family. Acetyl-CoA carboxylase is a heterohexamer composed of biotin carboxyl carrier protein (AccB), biotin carboxylase (AccC) and two subunits each of ACCase subunit alpha (AccA) and ACCase subunit beta (AccD). Requires Zn(2+) as cofactor.

The protein localises to the cytoplasm. The enzyme catalyses N(6)-carboxybiotinyl-L-lysyl-[protein] + acetyl-CoA = N(6)-biotinyl-L-lysyl-[protein] + malonyl-CoA. It functions in the pathway lipid metabolism; malonyl-CoA biosynthesis; malonyl-CoA from acetyl-CoA: step 1/1. In terms of biological role, component of the acetyl coenzyme A carboxylase (ACC) complex. Biotin carboxylase (BC) catalyzes the carboxylation of biotin on its carrier protein (BCCP) and then the CO(2) group is transferred by the transcarboxylase to acetyl-CoA to form malonyl-CoA. The chain is Acetyl-coenzyme A carboxylase carboxyl transferase subunit beta from Photobacterium profundum (strain SS9).